The primary structure comprises 388 residues: Putative nickel insertion protein (388 aa).

This sequence belongs to the LarC family.

The protein is Putative nickel insertion protein of Geobacter sulfurreducens (strain ATCC 51573 / DSM 12127 / PCA).